Here is a 260-residue protein sequence, read N- to C-terminus: Adenosylcobinamide-GDP ribazoletransferase (260 aa).

Helical transmembrane passes span 31–51 (IIFFPFIGFLEGVFCIFLVNI), 55–75 (IFSSSVISIILLVFLFSVRGI), 111–131 (VIGVAGAVALVLDVLCRFAFV), 140–160 (FLIFLFMFCFSRWIVIPLMYY), 177–197 (ISSWQVIISTVLPIFLLVYFT), 202–222 (FIFLPLIALFLFFISYILKKF), and 234–254 (HLGATVEITEIVFLICFLLGE).

This sequence belongs to the CobS family. Requires Mg(2+) as cofactor.

The protein resides in the cell inner membrane. It carries out the reaction alpha-ribazole + adenosylcob(III)inamide-GDP = adenosylcob(III)alamin + GMP + H(+). The catalysed reaction is alpha-ribazole 5'-phosphate + adenosylcob(III)inamide-GDP = adenosylcob(III)alamin 5'-phosphate + GMP + H(+). Its pathway is cofactor biosynthesis; adenosylcobalamin biosynthesis; adenosylcobalamin from cob(II)yrinate a,c-diamide: step 7/7. Its function is as follows. Joins adenosylcobinamide-GDP and alpha-ribazole to generate adenosylcobalamin (Ado-cobalamin). Also synthesizes adenosylcobalamin 5'-phosphate from adenosylcobinamide-GDP and alpha-ribazole 5'-phosphate. This is Adenosylcobinamide-GDP ribazoletransferase from Thermodesulfovibrio yellowstonii (strain ATCC 51303 / DSM 11347 / YP87).